Consider the following 365-residue polypeptide: Medium chain reductase pydE (365 aa).

The Enoyl reductase (ER) domain occupies 21–362 (KLIDSLPVPP…SKRARGKVLI (342 aa)). Residues 185–188 (SGSV), Tyr226, 274–275 (IG), and 354–355 (KR) contribute to the NADP(+) site.

The protein belongs to the zinc-containing alcohol dehydrogenase family. In terms of assembly, monomer.

Its pathway is mycotoxin biosynthesis. Medium chain reductase; part of the gene cluster that mediates the biosynthesis of pyrrocidines, fungal natural products containing a macrocyclic para-cyclophane connected to a decahydrofluorene ring system that show potent antibiotic activities toward Gram-negative bacteria. Within the pathway, pydE functions synergistically with pydB, pydX and pydZ to form the cyclophane. The pathway begins with the PKS-NRPS pydA which, with the help of the trans-enoyl reductase pydC, synthesizes the polyketide-tyrosyl acyl thioester product which can be reductively off-loaded by the terminal reductase (R) domain in pydA. The alpha/beta hydrolase pydG is then required to catalyze the subsequent Knoevenagel condensation that affords the 3-pyrrolin-2-one ring, whereas the four proteins pydB, pydE, pydX and pydZ then function synergistically to form the cyclophane. PydB and the membrane-bound pydX and pydZ are lipid-binding proteins that can sequester and mold the pdyG product into the inverse S-shape. Binding of the medium chain reductase pydE to the complex would trigger the cascade oxidative cyclization. PydY is involved in the Diels-Alder cycloaddition that forms the decahydrofluorene core. Additional non-enzymatic hydroxylation yields pyrrocidine A2 which can be further reduced into pyrrocidine B by an endogenous reductase. In Acremonium sp, this protein is Medium chain reductase pydE.